Consider the following 90-residue polypeptide: Co-chaperonin GroES (90 aa).

Belongs to the GroES chaperonin family. As to quaternary structure, heptamer of 7 subunits arranged in a ring. Interacts with the chaperonin GroEL.

The protein localises to the cytoplasm. Its function is as follows. Together with the chaperonin GroEL, plays an essential role in assisting protein folding. The GroEL-GroES system forms a nano-cage that allows encapsulation of the non-native substrate proteins and provides a physical environment optimized to promote and accelerate protein folding. GroES binds to the apical surface of the GroEL ring, thereby capping the opening of the GroEL channel. In Phocaeicola vulgatus (strain ATCC 8482 / DSM 1447 / JCM 5826 / CCUG 4940 / NBRC 14291 / NCTC 11154) (Bacteroides vulgatus), this protein is Co-chaperonin GroES.